A 530-amino-acid polypeptide reads, in one-letter code: uncharacterized protein (530 aa).

This is an uncharacterized protein from Acanthamoeba polyphaga (Amoeba).